The chain runs to 663 residues: uncharacterized protein (663 aa).

Position 207–214 (207–214 (GPPGTGKT)) interacts with ATP.

It belongs to the DNA2/NAM7 helicase family.

This is an uncharacterized protein from Methanocaldococcus jannaschii (strain ATCC 43067 / DSM 2661 / JAL-1 / JCM 10045 / NBRC 100440) (Methanococcus jannaschii).